We begin with the raw amino-acid sequence, 349 residues long: Short-wave-sensitive opsin 1 (349 aa).

Topologically, residues 1 to 34 are extracellular; that stretch reads MSKMSEEEEFLLFKNISLVGPWDGPQYHLAPVWA. N-linked (GlcNAc...) asparagine glycosylation is present at N15. Residues 35-59 traverse the membrane as a helical segment; that stretch reads FHLQAVFMGFVFFVGTPLNATVLVA. Residues 60-71 are Cytoplasmic-facing; that stretch reads TLRYRKLRQPLN. A helical transmembrane segment spans residues 72–97; it reads YILVNVSLGGFIYCIFSVFIVFITSC. Residues 98 to 111 are Extracellular-facing; that stretch reads YGYFVFGRHVCALE. An intrachain disulfide couples C108 to C185. A helical membrane pass occupies residues 112-131; it reads AFLGCTAGLVTGWSLAFLAF. Over 132-150 the chain is Cytoplasmic; the sequence is ERYIIICKPFGNFRFSSKH. The chain crosses the membrane as a helical span at residues 151–174; the sequence is ALMVVVATWTIGIGVSIPPFFGWS. Residues 175-200 are Extracellular-facing; sequence RFVPEGLQCSCGPDWYTVGTKYYSEY. A helical membrane pass occupies residues 201-228; sequence YTWFLFIFCYIVPLSLICFSYSQLLGAL. At 229 to 250 the chain is on the cytoplasmic side; that stretch reads RAVAAQQQESASTQKAEREVSH. Residues 251 to 274 traverse the membrane as a helical segment; it reads MVVVMVGSFCLCYTPYAALAMYIV. Residues 275 to 282 are Extracellular-facing; sequence NNRNHGVD. The chain crosses the membrane as a helical span at residues 283-307; the sequence is LRLVTIPAFFSKSACVYNPIIYCFM. Residue K294 is modified to N6-(retinylidene)lysine. Residues 308 to 349 lie on the Cytoplasmic side of the membrane; that stretch reads NKQFRACIMEMVCGKPMTDESELSSSQKTEVSTVSSSQVGPN. Positions 327–349 are disordered; sequence ESELSSSQKTEVSTVSSSQVGPN. Residues 330–349 are compositionally biased toward polar residues; it reads LSSSQKTEVSTVSSSQVGPN.

Belongs to the G-protein coupled receptor 1 family. Opsin subfamily. Phosphorylated on some or all of the serine and threonine residues present in the C-terminal region.

It is found in the cell membrane. Its subcellular location is the photoreceptor inner segment. It localises to the cell projection. The protein resides in the cilium. The protein localises to the photoreceptor outer segment. It is found in the cytoplasm. Its subcellular location is the perinuclear region. In terms of biological role, visual pigments are the light-absorbing molecules that mediate vision. They consist of an apoprotein, opsin, covalently linked to cis-retinal. Required for the maintenance of cone outer segment organization in the ventral retina, but not essential for the maintenance of functioning cone photoreceptors. Involved in ensuring correct abundance and localization of retinal membrane proteins. May increase spectral sensitivity in dim light. This is Short-wave-sensitive opsin 1 (OPN1SW) from Bos taurus (Bovine).